A 125-amino-acid chain; its full sequence is Urotensin-2 (125 aa).

Positions 1 to 20 (MYKLASCCLLFIGFLNPLFS) are cleaved as a signal peptide. Residues 21–111 (LPLLDSGEVS…HLLARIRKPY (91 aa)) constitute a propeptide that is removed on maturation. Cysteines 119 and 124 form a disulfide.

It belongs to the urotensin-2 family.

It localises to the secreted. Functionally, highly potent vasoconstrictor. The protein is Urotensin-2 (UTS2) of Macaca mulatta (Rhesus macaque).